The following is a 278-amino-acid chain: uncharacterized protein (278 aa).

A signal peptide spans 1 to 32 (MSSASFTTKALSVLAALTAASAPLVAASPAHA). Residues 33 to 236 (LANARNVTGS…HAEWIAYYTG (204 aa)) form the Peptidase S1 domain. Residues Cys-59 and Cys-75 are joined by a disulfide bond. Catalysis depends on charge relay system residues His-74, Asp-123, and Ser-189.

The protein belongs to the peptidase S1 family.

It localises to the secreted. This is an uncharacterized protein from Corynebacterium glutamicum (strain R).